Reading from the N-terminus, the 304-residue chain is uncharacterized protein (304 aa).

The signal sequence occupies residues 1 to 22 (MKKSLTLLILLLCSLLFSTVLS). The interval 91-111 (PAPAPTPESSDPDEPMKPDDS) is disordered. Asn-133, Asn-160, Asn-183, and Asn-233 each carry an N-linked (GlcNAc...) asparagine glycan. Residue Ser-282 is the site of GPI-anchor amidated serine attachment. The propeptide at 283-304 (SSHLFGVLPFLPLVLCIFLFLL) is removed in mature form.

The protein localises to the cell membrane. This is an uncharacterized protein from Arabidopsis thaliana (Mouse-ear cress).